The following is a 236-amino-acid chain: Small ribosomal subunit protein uS2c (236 aa).

Belongs to the universal ribosomal protein uS2 family.

The protein localises to the plastid. This chain is Small ribosomal subunit protein uS2c (rps2), found in Cuscuta obtusiflora (Peruvian dodder).